The primary structure comprises 746 residues: MGNNENGGISFCVFVVVIGFGTGAVAQEPANQSEAVTSLEEIVVTGGRSAQQISEIARTIYVVDSDQIQAEARSGKTLQQILGETIPSFDPASDGARTSFGQNLRGRPPLILVDGVSMNSARSLSRQFDAIDPFNIERVEVLSGATAIYGGNATGGIINIITKKGKDAEPGLHAEVTGGMGSGFAGSQDFDRNAAGAVTYNSENWDARLSIAGNRTGAFYDGSGTLLIPDITQTSTAFNERIDLMGSIGYQIDDDRRVEFSGQYFDSKQDSDYGLYYGPFFAALADPSLFETRSGYESDFNPQTRRSMLNVTYTDNDVFGQQLLLQGSYRTERIKFHPFPASGNSETGPYFYGSSQDTDYYGIRAALVAEPTDALKITYGIDADMDSFTARQNIFDMVAAGQSGGLDFNTIGKTGLYPSIDVSTVAGFAEASYEATDRLTLNGGVRYQFVNTEVSDFIGAAQQVAILQGRATSADTIPGGEVNYDAALFSAGATYQLTNTQQVYANFSQGFELPDPAKYYGIGNYSFSGGHYTLVNSVNVGDSALEAIKTNSFEIGYRLDDGTFNLETAAYYSLSDRSINLNRSSLAVEIIDRERRVYGIEGKAGVKLDHGFDVGVLGHWVRTEVKGADGWEKDSVGSASVSKLGGYVGWTNDALSLRFSGQHIFELTDAQNFTIDDYTLFDLTGGYRFENTDTTLNFGIHNVFDTDYTTVWGSRAKALYGGLADESVFDYKGRGRTFAVSLTKVF.

The first 26 residues, 1–26, serve as a signal peptide directing secretion; the sequence is MGNNENGGISFCVFVVVIGFGTGAVA. Positions 40 to 47 match the TonB box motif; the sequence is EEIVVTGG. One can recognise a TBDR plug domain in the interval 52–163; it reads QISEIARTIY…TGGIINIITK (112 aa). One can recognise a TBDR beta-barrel domain in the interval 169-746; it reads EPGLHAEVTG…TFAVSLTKVF (578 aa). The TonB C-terminal box motif lies at 729–746; it reads FDYKGRGRTFAVSLTKVF.

Belongs to the TonB-dependent receptor family.

The protein localises to the cell outer membrane. Receptor for the siderophore rhizobactin. This chain is Rhizobactin receptor (rhtA), found in Rhizobium meliloti (strain 1021) (Ensifer meliloti).